A 196-amino-acid chain; its full sequence is MATPLDEKLRALAADEAMKCGLDVEKLTFTRAGAKSSVKIAVDADERPDLDLLEEASQLIGAAFDAAEEAQQIDLGPSYTLEVTTPGLDFPLREARNFQRNIGRLANLPGGGKGRIAAVENDEVAILPAAKKKAGKKSQGKKAGKKTPQAPVQIYPRAELAGSTIEVEFSPAPAAEQELLGLTMAEYHELAKSDEA.

Over residues 131-145 (KKKAGKKSQGKKAGK) the composition is skewed to basic residues. The disordered stretch occupies residues 131 to 153 (KKKAGKKSQGKKAGKKTPQAPVQ).

The protein belongs to the RimP family.

The protein resides in the cytoplasm. Its function is as follows. Required for maturation of 30S ribosomal subunits. The sequence is that of Ribosome maturation factor RimP from Corynebacterium urealyticum (strain ATCC 43042 / DSM 7109).